Here is a 478-residue protein sequence, read N- to C-terminus: Aspartyl/glutamyl-tRNA(Asn/Gln) amidotransferase subunit B 1 (478 aa).

Belongs to the GatB/GatE family. GatB subfamily. In terms of assembly, heterotrimer of A, B and C subunits.

The enzyme catalyses L-glutamyl-tRNA(Gln) + L-glutamine + ATP + H2O = L-glutaminyl-tRNA(Gln) + L-glutamate + ADP + phosphate + H(+). The catalysed reaction is L-aspartyl-tRNA(Asn) + L-glutamine + ATP + H2O = L-asparaginyl-tRNA(Asn) + L-glutamate + ADP + phosphate + 2 H(+). In terms of biological role, allows the formation of correctly charged Asn-tRNA(Asn) or Gln-tRNA(Gln) through the transamidation of misacylated Asp-tRNA(Asn) or Glu-tRNA(Gln) in organisms which lack either or both of asparaginyl-tRNA or glutaminyl-tRNA synthetases. The reaction takes place in the presence of glutamine and ATP through an activated phospho-Asp-tRNA(Asn) or phospho-Glu-tRNA(Gln). The polypeptide is Aspartyl/glutamyl-tRNA(Asn/Gln) amidotransferase subunit B 1 (Syntrophus aciditrophicus (strain SB)).